The chain runs to 165 residues: ATP synthase subunit b (165 aa).

Residues 7–27 (STTIGDIIIVSGSVLLLFILI) form a helical membrane-spanning segment.

The protein belongs to the ATPase B chain family. F-type ATPases have 2 components, F(1) - the catalytic core - and F(0) - the membrane proton channel. F(1) has five subunits: alpha(3), beta(3), gamma(1), delta(1), epsilon(1). F(0) has three main subunits: a(1), b(2) and c(10-14). The alpha and beta chains form an alternating ring which encloses part of the gamma chain. F(1) is attached to F(0) by a central stalk formed by the gamma and epsilon chains, while a peripheral stalk is formed by the delta and b chains.

The protein localises to the cell membrane. Functionally, f(1)F(0) ATP synthase produces ATP from ADP in the presence of a proton or sodium gradient. F-type ATPases consist of two structural domains, F(1) containing the extramembraneous catalytic core and F(0) containing the membrane proton channel, linked together by a central stalk and a peripheral stalk. During catalysis, ATP synthesis in the catalytic domain of F(1) is coupled via a rotary mechanism of the central stalk subunits to proton translocation. In terms of biological role, component of the F(0) channel, it forms part of the peripheral stalk, linking F(1) to F(0). The protein is ATP synthase subunit b of Streptococcus agalactiae serotype Ia (strain ATCC 27591 / A909 / CDC SS700).